Consider the following 169-residue polypeptide: MERAIFAGGCFWCMVQPFEEQAGILSVRSGYTGGHLPNPSYEQVCAKTTGHTEAVEIIFDPKQIAYKDLVELYWAQTDPTDAFGQFEDRGDNYRPVIYYTTERQKEIAEQSKANLQASGRFDQPIVTTIEPAEPFYLAEDYHQGFYKKNPKRYAQSSAIRHQFLEENWS.

Cys-10 is an active-site residue.

It belongs to the MsrA Met sulfoxide reductase family.

The enzyme catalyses L-methionyl-[protein] + [thioredoxin]-disulfide + H2O = L-methionyl-(S)-S-oxide-[protein] + [thioredoxin]-dithiol. It catalyses the reaction [thioredoxin]-disulfide + L-methionine + H2O = L-methionine (S)-S-oxide + [thioredoxin]-dithiol. Functionally, has an important function as a repair enzyme for proteins that have been inactivated by oxidation. Catalyzes the reversible oxidation-reduction of methionine sulfoxide in proteins to methionine. In Streptococcus pyogenes serotype M12 (strain MGAS2096), this protein is Peptide methionine sulfoxide reductase MsrA.